Reading from the N-terminus, the 297-residue chain is Nucleotide-binding protein DSY4845 (297 aa).

13 to 20 provides a ligand contact to ATP; sequence GLSGAGKT. A GTP-binding site is contributed by 64–67; the sequence is DLRG.

Belongs to the RapZ-like family.

Functionally, displays ATPase and GTPase activities. The sequence is that of Nucleotide-binding protein DSY4845 from Desulfitobacterium hafniense (strain Y51).